The chain runs to 315 residues: tRNA dimethylallyltransferase (315 aa).

13 to 20 (GPTASGKS) is an ATP binding site. 15–20 (TASGKS) serves as a coordination point for substrate. 2 interaction with substrate tRNA regions span residues 38 to 41 (DSMQ) and 162 to 166 (QRLAR).

The protein belongs to the IPP transferase family. Monomer. Mg(2+) is required as a cofactor.

The catalysed reaction is adenosine(37) in tRNA + dimethylallyl diphosphate = N(6)-dimethylallyladenosine(37) in tRNA + diphosphate. Functionally, catalyzes the transfer of a dimethylallyl group onto the adenine at position 37 in tRNAs that read codons beginning with uridine, leading to the formation of N6-(dimethylallyl)adenosine (i(6)A). This Paramagnetospirillum magneticum (strain ATCC 700264 / AMB-1) (Magnetospirillum magneticum) protein is tRNA dimethylallyltransferase.